A 601-amino-acid polypeptide reads, in one-letter code: ATP-dependent RNA helicase DeaD (601 aa).

The Q motif motif lies at 6 to 34 (STFSFLGLNPFIIKSLSKMGYVKPSPIQA). Residues 37 to 208 (IPLLLEGRDV…KRFMKNPQEI (172 aa)) enclose the Helicase ATP-binding domain. 50–57 (AQTGSGKT) serves as a coordination point for ATP. Residues 156 to 159 (DEAD) carry the DEAD box motif. The Helicase C-terminal domain occupies 231–378 (KTDALIRFLE…EVQLPKIEVL (148 aa)). Positions 564–581 (SIFNKDKNNKRRFSDNRL) are enriched in basic and acidic residues. A disordered region spans residues 564–601 (SIFNKDKNNKRRFSDNRLNKSSSIKNETKSSFFRRKSV). Residues 582 to 594 (NKSSSIKNETKSS) are compositionally biased toward polar residues.

This sequence belongs to the DEAD box helicase family. DeaD/CsdA subfamily.

It is found in the cytoplasm. The catalysed reaction is ATP + H2O = ADP + phosphate + H(+). Functionally, DEAD-box RNA helicase involved in various cellular processes at low temperature, including ribosome biogenesis, mRNA degradation and translation initiation. This chain is ATP-dependent RNA helicase DeaD, found in Buchnera aphidicola subsp. Schizaphis graminum (strain Sg).